Consider the following 68-residue polypeptide: Metallothionein-3 (68 aa).

Residue M1 is modified to N-acetylmethionine. Positions 1 to 30 are beta; it reads MDPETCPCPSGGSCTCADSCKCEGCKCTSC. A divalent metal cation is bound by residues C6, C8, C14, C16, C20, C22, C25, C27, and C30. An alpha region spans residues 31–68; the sequence is KKSCCSCCPAECEKCAKDCVCKGGEAAEAEAEKCSCCQ. S33 is modified (phosphoserine). Residues C34, C35, C37, C38, C42, C45, C49, C51, C64, C66, and C67 each contribute to the a divalent metal cation site.

The protein belongs to the metallothionein superfamily. Type 1 family. In terms of tissue distribution, abundant in a subset of astrocytes in the normal human brain, but greatly reduced in the Alzheimer disease (AD) brain.

In terms of biological role, binds heavy metals. Contains three zinc and three copper atoms per polypeptide chain and only a negligible amount of cadmium. Inhibits survival and neurite formation of cortical neurons in vitro. The protein is Metallothionein-3 (MT3) of Homo sapiens (Human).